The sequence spans 430 residues: Glutamate-1-semialdehyde 2,1-aminomutase (430 aa).

Position 267 is an N6-(pyridoxal phosphate)lysine (K267).

The protein belongs to the class-III pyridoxal-phosphate-dependent aminotransferase family. HemL subfamily. In terms of assembly, homodimer. Pyridoxal 5'-phosphate is required as a cofactor.

The protein localises to the cytoplasm. It catalyses the reaction (S)-4-amino-5-oxopentanoate = 5-aminolevulinate. The protein operates within porphyrin-containing compound metabolism; protoporphyrin-IX biosynthesis; 5-aminolevulinate from L-glutamyl-tRNA(Glu): step 2/2. The sequence is that of Glutamate-1-semialdehyde 2,1-aminomutase from Sulfurovum sp. (strain NBC37-1).